Reading from the N-terminus, the 68-residue chain is Peptide Hp1090 (68 aa).

The N-terminal stretch at 1 to 23 (MKTQFAIFLITLVLFQMFSQSDA) is a signal peptide. The residue at position 36 (phenylalanine 36) is a Phenylalanine amide. Residues 40–68 (GLSDLDDLDESFDGEVSQADIDFLKELMQ) constitute a propeptide that is removed on maturation.

The protein belongs to the non-disulfide-bridged peptide (NDBP) superfamily. Short antimicrobial peptide (group 4) family. Expressed by the venom gland.

It is found in the secreted. The protein resides in the target cell membrane. In terms of biological role, amphipathic peptide which inhibits the growth of Gram-positive bacteria. The chain is Peptide Hp1090 from Heterometrus petersii (Asian forest scorpion).